A 137-amino-acid polypeptide reads, in one-letter code: Proofreading thioesterase EntH (137 aa).

The active-site Nucleophile or proton acceptor is the Glu63.

Belongs to the thioesterase PaaI family. As to quaternary structure, homotetramer. Dimer of dimers. Interacts specifically with the aryl carrier protein (ArCP) domain of EntB.

The protein localises to the cytoplasm. It participates in siderophore biosynthesis; enterobactin biosynthesis. Functionally, required for optimal enterobactin synthesis. Acts as a proofreading enzyme that prevents EntB misacylation by hydrolyzing the thioester bound existing between EntB and wrongly charged molecules. This chain is Proofreading thioesterase EntH, found in Cronobacter sakazakii (strain ATCC BAA-894) (Enterobacter sakazakii).